Here is a 341-residue protein sequence, read N- to C-terminus: Putative UPF0607 protein ENSP00000381514 (341 aa).

Basic and acidic residues predominate over residues 78–89; sequence AEEPKEATEVKD. Disordered stretches follow at residues 78–131 and 216–282; these read AEEP…NPRP and GLLT…KLPC. Polar residues predominate over residues 108–127; sequence EAASTSRPLETQGNLTSSWY. Residues 243 to 252 show a composition bias toward basic residues; the sequence is AGHRSRKRKL.

It belongs to the UPF0607 family.

The protein is Putative UPF0607 protein ENSP00000381514 of Homo sapiens (Human).